The primary structure comprises 354 residues: MSELKNDRYLRALLRQPVDVTPVWMMRQAGRYLPEYKATRAEAGDFMSLCRNADLACEVTLQPLRRFPLDATILFSDILTVPDAMGLGLWFEQGEGPRFARPIQHRRDVEQLPIPDPEQELGYVMNAVRAIRQRLQGAVPLIGFSGSPWTLATYMVEGGSSKAFTKIKQMLYAEPETLHLLLDKLADSVVLYLNGQIRAGAQAVMLFDTWGGALTGADYREFSMHYMHKIVDGLLREQDGRRVPVTLFTKGGGQWLEAMAATGCDALGLDWSTDIADARRRVGDKVALQGNMDPSVLYGSPARIEREVATILDAFGPGEGHVFNLGHGIHQDVPPAHAGHFVAAVHRLSQSYHR.

Residues 27-31 (RQAGR), D77, Y154, T209, and H327 contribute to the substrate site.

Belongs to the uroporphyrinogen decarboxylase family. As to quaternary structure, homodimer.

Its subcellular location is the cytoplasm. The catalysed reaction is uroporphyrinogen III + 4 H(+) = coproporphyrinogen III + 4 CO2. Its pathway is porphyrin-containing compound metabolism; protoporphyrin-IX biosynthesis; coproporphyrinogen-III from 5-aminolevulinate: step 4/4. Functionally, catalyzes the decarboxylation of four acetate groups of uroporphyrinogen-III to yield coproporphyrinogen-III. This Sodalis glossinidius (strain morsitans) protein is Uroporphyrinogen decarboxylase.